Reading from the N-terminus, the 309-residue chain is Mitogen-activated protein kinase kinase 8 (309 aa).

In terms of domain architecture, Protein kinase spans 53-305 (LDRISVLGSG…ASQLLNHPFL (253 aa)). Residues 59-67 (LGSGNGGTV) and Lys82 each bind ATP. Residue Asp167 is the Proton acceptor of the active site. Residues Ser195 and Ser201 each carry the phosphoserine modification. Residue Thr205 is modified to Phosphothreonine.

The protein belongs to the protein kinase superfamily. STE Ser/Thr protein kinase family. MAP kinase kinase subfamily. Post-translationally, phosphorylation at Ser-195 and Ser-201 by MAP kinase kinase kinases positively regulates kinase activity.

The enzyme catalyses L-seryl-[protein] + ATP = O-phospho-L-seryl-[protein] + ADP + H(+). It carries out the reaction L-threonyl-[protein] + ATP = O-phospho-L-threonyl-[protein] + ADP + H(+). It catalyses the reaction L-tyrosyl-[protein] + ATP = O-phospho-L-tyrosyl-[protein] + ADP + H(+). The polypeptide is Mitogen-activated protein kinase kinase 8 (MKK8) (Arabidopsis thaliana (Mouse-ear cress)).